We begin with the raw amino-acid sequence, 32 residues long: Tail virion protein G7P (32 aa).

The helical transmembrane segment at 8 to 28 threads the bilayer; the sequence is IIYVVFALGLVVSFGLGAITA.

The protein belongs to the inovirus G7P protein family.

The protein localises to the virion. The protein resides in the host membrane. Functionally, may initiate with G9P the virion concomitant assembly-budding process, by interacting with the packaging signal of the viral genome. The assembly-budding takes place at the host inner membrane. In turn, G7P and G9P are present at the end of the filamentous virion that emerges first from the bacterial host. In Escherichia coli (Bacteriophage IKe), this protein is Tail virion protein G7P (VII).